We begin with the raw amino-acid sequence, 485 residues long: Poly(ADP-ribose) glycohydrolase 2 (485 aa).

It belongs to the poly(ADP-ribose) glycohydrolase family. As to expression, expressed in head and tail neurons.

The protein localises to the cytoplasm. It carries out the reaction [(1''-&gt;2')-ADP-alpha-D-ribose](n) + H2O = [(1''-&gt;2')-ADP-alpha-D-ribose](n-1) + ADP-D-ribose. In terms of biological role, poly(ADP-ribose) synthesized after DNA damage is only present transiently and is rapidly degraded by poly(ADP-ribose) glycohydrolase. Poly(ADP-ribose) metabolism may be required for maintenance of the normal function of neuronal cells. The chain is Poly(ADP-ribose) glycohydrolase 2 from Caenorhabditis elegans.